The sequence spans 240 residues: UDP-2,3-diacylglucosamine hydrolase (240 aa).

Residues Asp8, His10, Asp41, Asn79, and His114 each contribute to the Mn(2+) site. 79-80 serves as a coordination point for substrate; sequence NR. Substrate-binding residues include Asp122, Ser160, Asn164, Lys167, and His195. Residues His195 and His197 each contribute to the Mn(2+) site.

Belongs to the LpxH family. Mn(2+) is required as a cofactor.

It localises to the cell inner membrane. The enzyme catalyses UDP-2-N,3-O-bis[(3R)-3-hydroxytetradecanoyl]-alpha-D-glucosamine + H2O = 2-N,3-O-bis[(3R)-3-hydroxytetradecanoyl]-alpha-D-glucosaminyl 1-phosphate + UMP + 2 H(+). The protein operates within glycolipid biosynthesis; lipid IV(A) biosynthesis; lipid IV(A) from (3R)-3-hydroxytetradecanoyl-[acyl-carrier-protein] and UDP-N-acetyl-alpha-D-glucosamine: step 4/6. Hydrolyzes the pyrophosphate bond of UDP-2,3-diacylglucosamine to yield 2,3-diacylglucosamine 1-phosphate (lipid X) and UMP by catalyzing the attack of water at the alpha-P atom. Involved in the biosynthesis of lipid A, a phosphorylated glycolipid that anchors the lipopolysaccharide to the outer membrane of the cell. This chain is UDP-2,3-diacylglucosamine hydrolase, found in Yersinia pestis bv. Antiqua (strain Angola).